A 205-amino-acid chain; its full sequence is Recombination protein RecR (205 aa).

The segment at Cys64–Cys79 adopts a C4-type zinc-finger fold. One can recognise a Toprim domain in the interval Arg87–Pro182.

The protein belongs to the RecR family.

Functionally, may play a role in DNA repair. It seems to be involved in an RecBC-independent recombinational process of DNA repair. It may act with RecF and RecO. The sequence is that of Recombination protein RecR from Roseiflexus castenholzii (strain DSM 13941 / HLO8).